A 518-amino-acid polypeptide reads, in one-letter code: Cytochrome P450 monooxygenase atnE (518 aa).

Residues 11 to 31 (FLAAFAVWMGVVVLAFAIFCV) form a helical membrane-spanning segment. N-linked (GlcNAc...) asparagine glycosylation is present at N184. Position 458 (C458) interacts with heme.

The protein belongs to the cytochrome P450 family. Requires heme as cofactor.

The protein localises to the membrane. It functions in the pathway secondary metabolite biosynthesis. Cytochrome P450 monooxygenase; part of the gene cluster that mediates the biosynthesis of aspercryptins, linear lipopeptides built from six amino acids including 2 highly unusual and nonproteogenic amino acids, 2-amino-octanoic acid (2aoa) and 2-amino-dodecanol (2adol). The core structure of aspercryptins is as follows: Ser/Ala-Thr-Ile/Val-2aoa-Asn-2adol. The first step of aspercryptin biosynthesis is the generation of the fatty acid precursors, octanoic and dodecanoic acids, by the FAS subunits atnF and atnM. The fatty acid precursors are likely transformed into the corresponding alpha-amino fatty acids in three steps. First, they are hydroxylated by the cytochrome P450 monooxygenase atnE, then oxidized to the corresponding alpha-keto acids by the NAD(P)-dependent oxidoreductase atnD, and finally converted to the alpha-amino fatty acids by the PLP-dependent aminotransferases atnH or atnJ. the alpha-amino fatty acids, 2-amino-octanoic and 2-amino-dodecanoic acids, are recognized, activated, and covalently tethered to the NRPS atnA by its fourth and sixth adenylation domains. The second module of atnA is the Thr module and contains an epimerase (E) domain responsible for the epimerization of Thr to D-allo-Thr. Additionally, despite atnA having only one epimerase domain, the first amino acid of aspercryptin A1 is D-Ser, suggesting that serine is either loaded directly as D-Ser on the first module or that the epimerase domain in the threonine module epimerizes both L-Ser and L-Thr. After condensation of the hexapeptide of aspercryptin, the C-terminal reductase (TE) domain might be involved in the reductive release and production of the aldehyde hexapeptide. Further reduction would generate aspercryptins. The variety of aspercryptins produced reflects the flexibility of the atnA NRPS, allowing incorporation of alanine instead of serine, valine for isoleucine, and a C10 fatty amino alcohol instead of the C12 version. AtnB seems to be involved in the selectivity for Ile versus Val by the third module. Moreover, type B, C and D aspercryptins have an additional N-terminal cichorine, acetyl and propionyl group respectively. The chain is Cytochrome P450 monooxygenase atnE from Emericella nidulans (strain FGSC A4 / ATCC 38163 / CBS 112.46 / NRRL 194 / M139) (Aspergillus nidulans).